The primary structure comprises 766 residues: Signal transducer and activator of transcription 3.2 (766 aa).

An Essential for nuclear import motif is present at residues 150–162 (DVRKKVQDLEQKM). Positions 580–670 (WNEGYIIGFI…DATNILVSPL (91 aa)) constitute an SH2 domain. A Phosphoserine; by NLK modification is found at S725.

It belongs to the transcription factor STAT family. Forms a homodimer or a heterodimer with a related family member. Interacts with nlk.2. Phosphorylation of both tyrosine and serine residues, together with dimerization, is required for mesoderm induction.

The protein localises to the cytoplasm. The protein resides in the nucleus. Functionally, transcription factor that binds to target promoter sequences and activates transcription upon il6st/gp130 stimulation. Mediates ventralization of embryos, at least in part via inhibition of smad2 signaling. Required for hairy2 to induce dll1/delta1 and promote neural crest cell proliferation and differentiation. Involved in TGFbeta-mediated mesoderm induction in early embryos, acting downstream of map3k7/tak1 and nlk.2. The chain is Signal transducer and activator of transcription 3.2 (stat3.2) from Xenopus laevis (African clawed frog).